We begin with the raw amino-acid sequence, 598 residues long: Elongation factor 4 (598 aa).

Residues 4 to 185 (KNIRNFSIIA…TIITKIPAPK (182 aa)) enclose the tr-type G domain. GTP contacts are provided by residues 16–21 (DHGKST) and 132–135 (NKID).

Belongs to the TRAFAC class translation factor GTPase superfamily. Classic translation factor GTPase family. LepA subfamily.

It is found in the cell inner membrane. The catalysed reaction is GTP + H2O = GDP + phosphate + H(+). Its function is as follows. Required for accurate and efficient protein synthesis under certain stress conditions. May act as a fidelity factor of the translation reaction, by catalyzing a one-codon backward translocation of tRNAs on improperly translocated ribosomes. Back-translocation proceeds from a post-translocation (POST) complex to a pre-translocation (PRE) complex, thus giving elongation factor G a second chance to translocate the tRNAs correctly. Binds to ribosomes in a GTP-dependent manner. The protein is Elongation factor 4 of Campylobacter jejuni subsp. jejuni serotype O:2 (strain ATCC 700819 / NCTC 11168).